The following is a 521-amino-acid chain: Histidine--tRNA ligase (521 aa).

L-histidine is bound by residues 137 to 139 (DLT), Arg164, Gln180, Asp184, Arg338, and 342 to 343 (YY).

It belongs to the class-II aminoacyl-tRNA synthetase family.

The catalysed reaction is tRNA(His) + L-histidine + ATP = L-histidyl-tRNA(His) + AMP + diphosphate + H(+). Its function is as follows. Involved in protein synthesis. Catalyzes the specific attachment of an amino acid to its cognate tRNA in a 2 step reaction: the amino acid (AA) is first activated by ATP to form AA-AMP and then transferred to the acceptor end of the tRNA. Required for germ cell development. This is Histidine--tRNA ligase from Caenorhabditis elegans.